The primary structure comprises 299 residues: Apolipoprotein E (299 aa).

The N-terminal stretch at 1 to 18 is a signal peptide; the sequence is MKALWAVLVVTLLAGCRA. Tandem repeats lie at residues 74–95, 96–117, 118–139, 140–161, 162–183, 184–205, 206–223, and 224–245. Residues 74-245 form an 8 X 22 AA approximate tandem repeats region; sequence VLMEDTMKEV…RLDEVREQME (172 aa). The LDL and other lipoprotein receptors binding stretch occupies residues 152–162; that stretch reads HLRKLRKRLLR. 156–159 is a binding site for heparin; the sequence is LRKR. Residues 204-273 form a lipid-binding and lipoprotein association region; that stretch reads AALTGQPLRE…GWFEPMMEDM (70 aa). Residue 219 to 226 coordinates heparin; that stretch reads GERLRGRL. The tract at residues 261-273 is specificity for association with VLDL; it reads RLKGWFEPMMEDM.

The protein belongs to the apolipoprotein A1/A4/E family. In terms of assembly, homotetramer. May interact with ABCA1; functionally associated with ABCA1 in the biogenesis of HDLs. May interact with APP/A4 amyloid-beta peptide; the interaction is extremely stable in vitro but its physiological significance is unclear. May interact with MAPT. May interact with MAP2. In the cerebrospinal fluid, interacts with secreted SORL1. Interacts with PMEL; this allows the loading of PMEL luminal fragment on ILVs to induce fibril nucleation. In terms of processing, APOE exists as multiple glycosylated and sialylated glycoforms within cells and in plasma. The extent of glycosylation and sialylation are tissue and context specific. Post-translationally, glycated in plasma VLDL. Phosphorylated by FAM20C in the extracellular medium.

The protein resides in the secreted. It localises to the extracellular space. It is found in the extracellular matrix. Its subcellular location is the extracellular vesicle. The protein localises to the endosome. The protein resides in the multivesicular body. In terms of biological role, APOE is an apolipoprotein, a protein associating with lipid particles, that mainly functions in lipoprotein-mediated lipid transport between organs via the plasma and interstitial fluids. APOE is a core component of plasma lipoproteins and is involved in their production, conversion and clearance. Apolipoproteins are amphipathic molecules that interact both with lipids of the lipoprotein particle core and the aqueous environment of the plasma. As such, APOE associates with chylomicrons, chylomicron remnants, very low density lipoproteins (VLDL) and intermediate density lipoproteins (IDL) but shows a preferential binding to high-density lipoproteins (HDL). It also binds a wide range of cellular receptors including the LDL receptor/LDLR and the very low-density lipoprotein receptor/VLDLR that mediate the cellular uptake of the APOE-containing lipoprotein particles. Finally, APOE also has a heparin-binding activity and binds heparan-sulfate proteoglycans on the surface of cells, a property that supports the capture and the receptor-mediated uptake of APOE-containing lipoproteins by cells. The protein is Apolipoprotein E (APOE) of Heterocephalus glaber (Naked mole rat).